The following is a 3646-amino-acid chain: Platelet adherence protein A (3646 aa).

Residues 1–33 (MKDFLKKVLILFTVLLMSMPSSVLNLGTSVVRA) form the signal peptide. Positions 34–359 (DDPLNIETRR…KNVSFYVNEQ (326 aa)) are does not bind platelets. An F2, binds platelets, fibronectin, vitronectin, salivary pellicle, causes ADP secretion by dense granules region spans residues 34–690 (DDPLNIETRR…NQDAHAKTKD (657 aa)). Residues 34-1328 (DDPLNIETRR…KFVLSDTLEE (1295 aa)) are binds platelets. The VWFA domain occupies 75-373 (DLVILQDASG…VFSQKILESV (299 aa)). Positions 214 to 216 (NGR) match the Integrin-like recognition motif NGR motif. The Integrin-like recognition motif RGT signature appears at 416–418 (RGT). The interval 439 to 466 (KNSFDYDLSKEARAPETDEDSEVDPPEN) is disordered. The span at 445 to 454 (DLSKEARAPE) shows a compositional bias: basic and acidic residues. Positions 485–487 (AGD) match the Integrin-like recognition motif AGD motif. Residues 709–3205 (TEVDKKVNEK…TVPNKATIAF (2497 aa)) are central region with RrgB repeats. Basic and acidic residues-rich tracts occupy residues 1124-1135 (KDKNDHKGEKET) and 1563-1573 (DHNPKFHKDSN). Disordered stretches follow at residues 1124–1153 (KDKN…KKIN), 1563–1589 (DHNP…PIEK), 2011–2036 (FNND…EPEL), 2170–2198 (EKDS…KPSA), 2320–2343 (KTEK…IKKE), 2467–2492 (PNRP…PEIK), 2611–2644 (ASYR…PIEK), 2767–2792 (FNND…EPEL), 2916–2948 (PNKP…NSKP), 3202–3252 (TIAF…NPST), 3371–3412 (AAAK…AALE), and 3550–3618 (NDKP…PKTG). A compositionally biased stretch (polar residues) spans 2011–2022 (FNNDPGTEQSSK). Positions 2767–2778 (FNNDPGTEQSSK) are enriched in polar residues. Over residues 3210-3220 (GKNGTKESNPV) the composition is skewed to polar residues. Basic and acidic residues predominate over residues 3223–3237 (RPRDPEKPEEPKPNE). Coiled-coil stretches lie at residues 3326 to 3376 (IAKI…AKEK) and 3408 to 3475 (VAAL…VNDK). Residues 3371-3406 (AAAKEKAAAAPATPAPASDSDAGNATATPAPADNNA) are compositionally biased toward low complexity. A compositionally biased stretch (polar residues) spans 3550 to 3560 (NDKPKVTNTVN). Pro residues predominate over residues 3563 to 3605 (PPEPTTPPQTPPHTPPTTPGTPPPTTPDTPPAPKGDLPPAPTP). The LPXTG sorting signal motif lies at 3614-3618 (LPKTG). Thr-3617 is modified (pentaglycyl murein peptidoglycan amidated threonine). A propeptide spans 3618 to 3646 (GTSATMVNEVIIGMILVLMGLLLRRKPKH) (removed by sortase).

It is found in the secreted. The protein localises to the cell wall. Its activity is regulated as follows. Whole bacterial adhesion to Chinese hamster ovary cells expressing GPIIbIIIa is abrogated by integrin inhibitor RGDS and GPIIbIIIa inhibitor Abciximab. Its function is as follows. A cell wall protein involved with Hsa in host cell interactions required for colonization and pathogenesis. Involved in recognition of platelets. Interacts with human platelet integrin receptor GPIIbIIIa (a complex of ITGA2B and ITGB3). Involved in platelet spreading, presumably by activation of outside-in signaling leading to platelet activation and then spreading. Spreading also involves GPIIbIIIa. Binding to platelets under static conditions causes platelet dense granules to secrete ADP (similar to release induced by fibrinogen binding), has no effect on platelet alpha granule release. The N-terminal 656 aa residue fragment (called F2) also binds platelets, causes dense granule secretion and allows platelet spreading. Acts in concert with Hsa to promote binding to human fibronectin (FN1) and vitronectin (VTN), and biofilm formation. F2 bind activated platelets more strongly than unactivated platelets. Binding to both FN1 and VTN is mediated at least in part by their glycosylation. The chain is Platelet adherence protein A from Streptococcus gordonii (strain Challis / ATCC 35105 / BCRC 15272 / CH1 / DL1 / V288).